Consider the following 55-residue polypeptide: Spermatid nuclear transition protein 1 (55 aa).

Residues 1–42 are compositionally biased toward basic residues; sequence MSTSRKLKTHGMRRGKNRAPHKGVKRGGSKRKYRKSSLKSRK. Residues 1-55 form a disordered region; that stretch reads MSTSRKLKTHGMRRGKNRAPHKGVKRGGSKRKYRKSSLKSRKRGDDASRNYRSHL. Residues Ser-36, Ser-37, and Ser-40 each carry the phosphoserine modification.

Belongs to the nuclear transition protein 1 family. Testis.

It is found in the nucleus. Its subcellular location is the chromosome. In terms of biological role, plays a key role in the replacement of histones to protamine in the elongating spermatids of mammals. In condensing spermatids, loaded onto the nucleosomes, where it promotes the recruitment and processing of protamines, which are responsible for histone eviction. This chain is Spermatid nuclear transition protein 1 (Tnp1), found in Rattus norvegicus (Rat).